The sequence spans 311 residues: 1,4-dihydroxy-2-naphthoate octaprenyltransferase (311 aa).

Helical transmembrane passes span 31–51, 53–73, 104–126, 131–153, 157–177, 182–202, 220–240, 242–262, and 290–310; these read LTASFVPVLLGTVLAMFYVKV, LLLFLAMLFSCLWIQIATNLF, TILQLALASYGIAILLGVYICAS, LALIGLVGMAIGYLYTGGPLPIA, FGELFSGICMGSVFVLISFFI, INMQSILISIPIAILVGAINL, LAILMGHKGAVTLLAASFAVA, IWVVGLVITGAASPWLFVVFL, and TAQTNTFFGFLLSIGLLISYF.

The protein belongs to the MenA family. Type 1 subfamily.

It is found in the cell membrane. It carries out the reaction an all-trans-polyprenyl diphosphate + 1,4-dihydroxy-2-naphthoate + H(+) = a 2-demethylmenaquinol + CO2 + diphosphate. It functions in the pathway quinol/quinone metabolism; menaquinone biosynthesis; menaquinol from 1,4-dihydroxy-2-naphthoate: step 1/2. Its function is as follows. Conversion of 1,4-dihydroxy-2-naphthoate (DHNA) to demethylmenaquinone (DMK). The sequence is that of 1,4-dihydroxy-2-naphthoate octaprenyltransferase from Bacillus subtilis (strain 168).